The chain runs to 363 residues: Flagellar P-ring protein (363 aa).

The signal sequence occupies residues 1–20 (MKYKLVLAVAVLVFSLPSQA).

This sequence belongs to the FlgI family. As to quaternary structure, the basal body constitutes a major portion of the flagellar organelle and consists of four rings (L,P,S, and M) mounted on a central rod.

Its subcellular location is the periplasm. The protein localises to the bacterial flagellum basal body. Its function is as follows. Assembles around the rod to form the L-ring and probably protects the motor/basal body from shearing forces during rotation. The chain is Flagellar P-ring protein from Shewanella baltica (strain OS223).